Reading from the N-terminus, the 291-residue chain is NAD kinase (291 aa).

Aspartate 72 serves as the catalytic Proton acceptor. NAD(+) is bound by residues 72-73 (DG), 146-147 (ND), arginine 157, arginine 174, aspartate 176, 187-192 (TAYSLS), and glutamine 247.

This sequence belongs to the NAD kinase family. Requires a divalent metal cation as cofactor.

It is found in the cytoplasm. The catalysed reaction is NAD(+) + ATP = ADP + NADP(+) + H(+). Involved in the regulation of the intracellular balance of NAD and NADP, and is a key enzyme in the biosynthesis of NADP. Catalyzes specifically the phosphorylation on 2'-hydroxyl of the adenosine moiety of NAD to yield NADP. The protein is NAD kinase of Hydrogenovibrio crunogenus (strain DSM 25203 / XCL-2) (Thiomicrospira crunogena).